Consider the following 379-residue polypeptide: Chaperone protein DnaJ (379 aa).

The J domain maps to 5–70; the sequence is DYYEILGVPK…QKRAAYDQYG (66 aa). Residues 134-212 form a CR-type zinc finger; that stretch reads GVTKEIRIPT…CHGHGRIEKT (79 aa). Residues Cys147, Cys150, Cys164, Cys167, Cys186, Cys189, Cys200, and Cys203 each contribute to the Zn(2+) site. CXXCXGXG motif repeat units lie at residues 147–154, 164–171, 186–193, and 200–207; these read CEVCHGSG, CPTCHGAG, CPHCQGRG, and CNSCHGHG.

Belongs to the DnaJ family. Homodimer. It depends on Zn(2+) as a cofactor.

The protein localises to the cytoplasm. Participates actively in the response to hyperosmotic and heat shock by preventing the aggregation of stress-denatured proteins and by disaggregating proteins, also in an autonomous, DnaK-independent fashion. Unfolded proteins bind initially to DnaJ; upon interaction with the DnaJ-bound protein, DnaK hydrolyzes its bound ATP, resulting in the formation of a stable complex. GrpE releases ADP from DnaK; ATP binding to DnaK triggers the release of the substrate protein, thus completing the reaction cycle. Several rounds of ATP-dependent interactions between DnaJ, DnaK and GrpE are required for fully efficient folding. Also involved, together with DnaK and GrpE, in the DNA replication of plasmids through activation of initiation proteins. The polypeptide is Chaperone protein DnaJ (Cronobacter sakazakii (strain ATCC BAA-894) (Enterobacter sakazakii)).